A 60-amino-acid polypeptide reads, in one-letter code: Cytotoxin 8 (60 aa).

Intrachain disulfides connect Cys-3–Cys-21, Cys-14–Cys-38, Cys-42–Cys-53, and Cys-54–Cys-59.

It belongs to the three-finger toxin family. Short-chain subfamily. Type IA cytotoxin sub-subfamily. As to quaternary structure, monomer in solution; Homodimer and oligomer in the presence of negatively charged lipids forming a pore with a size ranging between 20 and 30 Angstroms. In terms of tissue distribution, expressed by the venom gland.

It localises to the secreted. It is found in the target cell membrane. Functionally, shows cytolytic activity on many different cells by forming pore in lipid membranes. In vivo, increases heart rate or kills the animal by cardiac arrest. In addition, it binds to heparin with high affinity, interacts with Kv channel-interacting protein 1 (KCNIP1) in a calcium-independent manner, and binds to integrin alpha-V/beta-3 (ITGAV/ITGB3) with moderate affinity. This Naja annulifera (Banded Egyptian cobra) protein is Cytotoxin 8.